Reading from the N-terminus, the 347-residue chain is N-acetyl-gamma-glutamyl-phosphate reductase (347 aa).

Cys155 is a catalytic residue.

It belongs to the NAGSA dehydrogenase family. Type 1 subfamily.

Its subcellular location is the cytoplasm. It catalyses the reaction N-acetyl-L-glutamate 5-semialdehyde + phosphate + NADP(+) = N-acetyl-L-glutamyl 5-phosphate + NADPH + H(+). It functions in the pathway amino-acid biosynthesis; L-arginine biosynthesis; N(2)-acetyl-L-ornithine from L-glutamate: step 3/4. In terms of biological role, catalyzes the NADPH-dependent reduction of N-acetyl-5-glutamyl phosphate to yield N-acetyl-L-glutamate 5-semialdehyde. In Akkermansia muciniphila (strain ATCC BAA-835 / DSM 22959 / JCM 33894 / BCRC 81048 / CCUG 64013 / CIP 107961 / Muc), this protein is N-acetyl-gamma-glutamyl-phosphate reductase.